The following is a 393-amino-acid chain: Endoglucanase 1 (393 aa).

The first 26 residues, 1 to 26 (MAFKLNIGLLALSLSLSLVHLDGVRA), serve as a signal peptide directing secretion. Asp34 acts as the Nucleophile in catalysis. Asp152 (proton donor) is an active-site residue. The interval 233–393 (GCQRKDDNTI…GGHKKCHKKH (161 aa)) is disordered. 2 stretches are compositionally biased toward low complexity: residues 319-329 (QGSSNGDATTG) and 337-370 (DSGS…NPGA). Asn343 is a glycosylation site (N-linked (GlcNAc...) asparagine). Positions 371–384 (AQGGQGGAQPGPSG) are enriched in gly residues.

Belongs to the glycosyl hydrolase 45 (cellulase K) family. In terms of processing, may also be O-glycosylated. In terms of tissue distribution, hyphal tip.

It localises to the secreted. The catalysed reaction is Endohydrolysis of (1-&gt;4)-beta-D-glucosidic linkages in cellulose, lichenin and cereal beta-D-glucans.. The sequence is that of Endoglucanase 1 (EGL1) from Mycosarcoma maydis (Corn smut fungus).